The primary structure comprises 127 residues: Aspartate 1-decarboxylase (127 aa).

Ser-25 serves as the catalytic Schiff-base intermediate with substrate; via pyruvic acid. Ser-25 bears the Pyruvic acid (Ser) mark. Residue Thr-57 coordinates substrate. The active-site Proton donor is Tyr-58. 73–75 serves as a coordination point for substrate; sequence GSA.

Belongs to the PanD family. Heterooctamer of four alpha and four beta subunits. It depends on pyruvate as a cofactor. Post-translationally, is synthesized initially as an inactive proenzyme, which is activated by self-cleavage at a specific serine bond to produce a beta-subunit with a hydroxyl group at its C-terminus and an alpha-subunit with a pyruvoyl group at its N-terminus.

It localises to the cytoplasm. The enzyme catalyses L-aspartate + H(+) = beta-alanine + CO2. Its pathway is cofactor biosynthesis; (R)-pantothenate biosynthesis; beta-alanine from L-aspartate: step 1/1. Its function is as follows. Catalyzes the pyruvoyl-dependent decarboxylation of aspartate to produce beta-alanine. This is Aspartate 1-decarboxylase from Dechloromonas aromatica (strain RCB).